Reading from the N-terminus, the 152-residue chain is 3-hydroxyacyl-[acyl-carrier-protein] dehydratase FabZ (152 aa).

The active site involves histidine 58.

This sequence belongs to the thioester dehydratase family. FabZ subfamily.

It localises to the cytoplasm. The enzyme catalyses a (3R)-hydroxyacyl-[ACP] = a (2E)-enoyl-[ACP] + H2O. Its function is as follows. Involved in unsaturated fatty acids biosynthesis. Catalyzes the dehydration of short chain beta-hydroxyacyl-ACPs and long chain saturated and unsaturated beta-hydroxyacyl-ACPs. The polypeptide is 3-hydroxyacyl-[acyl-carrier-protein] dehydratase FabZ (Prochlorococcus marinus (strain AS9601)).